The chain runs to 514 residues: Variant surface glycoprotein ILTAT 1.24 (514 aa).

Residues 1 to 23 (MVYRNILQLSVLKVLLIVLIVEA) form the signal peptide. 2 cysteine pairs are disulfide-bonded: Cys-37–Cys-162 and Cys-143–Cys-204. Asn-443 carries an N-linked (GlcNAc...) asparagine glycan. The segment at 451-476 (GVPVTQTQTAGADTTAEKCKGKGEKD) is disordered. A compositionally biased stretch (low complexity) spans 455 to 464 (TQTQTAGADT). Over residues 465–476 (TAEKCKGKGEKD) the composition is skewed to basic and acidic residues. Asp-491 carries GPI-anchor amidated aspartate lipidation. Residues 492–514 (SSILANKQFALSVASAAFVALLF) constitute a propeptide, removed in mature form.

It is found in the cell membrane. In terms of biological role, VSG forms a coat on the surface of the parasite. The trypanosome evades the immune response of the host by expressing a series of antigenically distinct VSGs from an estimated 1000 VSG genes. This Trypanosoma brucei brucei protein is Variant surface glycoprotein ILTAT 1.24.